Reading from the N-terminus, the 376-residue chain is Ribosomal RNA large subunit methyltransferase G (376 aa).

This sequence belongs to the methyltransferase superfamily. RlmG family.

It localises to the cytoplasm. It catalyses the reaction guanosine(1835) in 23S rRNA + S-adenosyl-L-methionine = N(2)-methylguanosine(1835) in 23S rRNA + S-adenosyl-L-homocysteine + H(+). Functionally, specifically methylates the guanine in position 1835 (m2G1835) of 23S rRNA. The protein is Ribosomal RNA large subunit methyltransferase G of Klebsiella pneumoniae subsp. pneumoniae (strain ATCC 700721 / MGH 78578).